The sequence spans 139 residues: Maintenance of telomere capping protein 7 (139 aa).

2 helical membrane-spanning segments follow: residues 13–33 and 42–62; these read SHHVLFAEPGFFLCNFFFVLL and FYFLFILLFIIYIAIIYFVFI. The segment at 94 to 121 is disordered; it reads RSVANPALPPQKKKKKKKKGTLRTGEVE. The span at 104-114 shows a compositional bias: basic residues; sequence QKKKKKKKKGT.

The protein localises to the membrane. Functionally, may be involved in telomere capping. This chain is Maintenance of telomere capping protein 7 (MTC7), found in Saccharomyces cerevisiae (strain ATCC 204508 / S288c) (Baker's yeast).